Consider the following 321-residue polypeptide: Peroxidase 28 (321 aa).

The signal sequence occupies residues 1-21 (MKIATFSVLLLLLFIFPVALA). 4 disulfides stabilise this stretch: Cys-32–Cys-111, Cys-65–Cys-70, Cys-117–Cys-317, and Cys-196–Cys-228. His-63 acts as the Proton acceptor in catalysis. Ca(2+) is bound by residues Asp-64, Val-67, Gly-69, Asp-71, and Ser-73. Pro-159 contributes to the substrate binding site. His-189 serves as a coordination point for heme b. Position 190 (Thr-190) interacts with Ca(2+). Ca(2+) contacts are provided by Asp-238, Thr-244, and Asp-249.

This sequence belongs to the peroxidase family. Classical plant (class III) peroxidase subfamily. The cofactor is heme b. Requires Ca(2+) as cofactor.

The protein resides in the secreted. It carries out the reaction 2 a phenolic donor + H2O2 = 2 a phenolic radical donor + 2 H2O. Removal of H(2)O(2), oxidation of toxic reductants, biosynthesis and degradation of lignin, suberization, auxin catabolism, response to environmental stresses such as wounding, pathogen attack and oxidative stress. These functions might be dependent on each isozyme/isoform in each plant tissue. This Arabidopsis thaliana (Mouse-ear cress) protein is Peroxidase 28 (PER28).